An 89-amino-acid chain; its full sequence is Cell division topological specificity factor (89 aa).

The protein belongs to the MinE family.

In terms of biological role, prevents the cell division inhibition by proteins MinC and MinD at internal division sites while permitting inhibition at polar sites. This ensures cell division at the proper site by restricting the formation of a division septum at the midpoint of the long axis of the cell. The polypeptide is Cell division topological specificity factor (Klebsiella pneumoniae (strain 342)).